We begin with the raw amino-acid sequence, 397 residues long: MTRVALAFSGGLDTTVCVSLLKEEYGYDEVIGVTVDVGQPATEFEEAQATADAHGIDLHVVDATAEFVDLCFDSVRANATYQGYPLGTALARPIIAESIVSVAKAENCDALAHGCTGKGNDQLRFEAVWRNSDLTVIAPIRELELTREWEQEYAAEHNLPVQAGNDGVWSIDTNLWSRSIEGGKLEDPNYTPPEDVYEWTADPATTTETELITIGFESGYPVSINDNAHDPVELVETLNEVAGEHGVGRTDMMEDRMLGLKVRENYEHPAATTLLNAHKALEGLVLTKDERDFKRHIDSEWAQKGYEGLVDHPLMDALEGFIDATQQRVTGTVTIKFEGGQARPVGRESAAAAYSADAASFNTSSIGEITQQDATGIAKYHGYQGRIANAATETDTK.

Alanine 7–threonine 15 is a binding site for ATP. Tyrosine 84 is a binding site for L-citrulline. Residue glycine 114 participates in ATP binding. Residues threonine 116, asparagine 120, and aspartate 121 each coordinate L-aspartate. Asparagine 120 is an L-citrulline binding site. Arginine 124, serine 170, serine 179, glutamate 254, and tyrosine 266 together coordinate L-citrulline.

This sequence belongs to the argininosuccinate synthase family. Type 1 subfamily. In terms of assembly, homotetramer.

It localises to the cytoplasm. The enzyme catalyses L-citrulline + L-aspartate + ATP = 2-(N(omega)-L-arginino)succinate + AMP + diphosphate + H(+). It functions in the pathway amino-acid biosynthesis; L-arginine biosynthesis; L-arginine from L-ornithine and carbamoyl phosphate: step 2/3. The chain is Argininosuccinate synthase from Haloquadratum walsbyi (strain DSM 16790 / HBSQ001).